A 256-amino-acid polypeptide reads, in one-letter code: MPASMFSIDNILAARPRCKDAVLPVAPSAAAPVVFPALHGDSLYGAGGGTSSDYGAFYPRPVAPGGAGLPAAVGSSRLGYNSYFYGQLHVQAAPVGPACCGAVPPLGAQQCSCVPTPPGYEGPGSVLVSPVPHQMLPYMNVGTLSRTELQLLNQLHCRRKRRHRTIFTDEQLEALENLFQETKYPDVGTREQLARKVHLREEKVEVWFKNRRAKWRRQKRSSSEESENAEKWNKTSSKASPEKREEEGKSDLDSDS.

Residues 160 to 219 (KRRHRTIFTDEQLEALENLFQETKYPDVGTREQLARKVHLREEKVEVWFKNRRAKWRRQK) constitute a DNA-binding region (homeobox). The segment at 213–256 (AKWRRQKRSSSEESENAEKWNKTSSKASPEKREEEGKSDLDSDS) is disordered. Positions 240-256 (SPEKREEEGKSDLDSDS) are enriched in basic and acidic residues.

This sequence belongs to the paired homeobox family. Bicoid subfamily. In early gastrulation, expressed in the dorsal lip. In later stages of development found in head, limbs and body wall. In the embryo, expressed in the postotic cranial neural crest cells, the frontonasal prominence, the first branchial arch and cleft, and specific regions of large joints.

The protein resides in the nucleus. In terms of biological role, regulates chordin (CHRD). May play a role in spatial programing within discrete embryonic fields or lineage compartments during organogenesis. In concert with NKX3-2, plays a role in defining the structural components of the middle ear; required for the development of the entire tympanic ring. Goosecoid-expressing regions of the gastrulating mouse egg cylinder have organizer-like activity when transplanted into Xenopus embryos. Probably involved in the regulatory networks that define neural crest cell fate specification and determine mesoderm cell lineages in mammals. This chain is Homeobox protein goosecoid (Gsc), found in Mus musculus (Mouse).